The following is a 348-amino-acid chain: Histidinol-phosphate aminotransferase (348 aa).

An N6-(pyridoxal phosphate)lysine modification is found at lysine 210.

The protein belongs to the class-II pyridoxal-phosphate-dependent aminotransferase family. Histidinol-phosphate aminotransferase subfamily. As to quaternary structure, homodimer. Requires pyridoxal 5'-phosphate as cofactor.

The enzyme catalyses L-histidinol phosphate + 2-oxoglutarate = 3-(imidazol-4-yl)-2-oxopropyl phosphate + L-glutamate. It functions in the pathway amino-acid biosynthesis; L-histidine biosynthesis; L-histidine from 5-phospho-alpha-D-ribose 1-diphosphate: step 7/9. The sequence is that of Histidinol-phosphate aminotransferase from Pseudomonas putida (strain ATCC 47054 / DSM 6125 / CFBP 8728 / NCIMB 11950 / KT2440).